The following is a 43-amino-acid chain: Protein PsbN (43 aa).

Residues 5 to 27 (NLVTISISCLLVSLTGYAIYTSF) traverse the membrane as a helical segment.

Belongs to the PsbN family.

The protein localises to the plastid. Its subcellular location is the chloroplast thylakoid membrane. Functionally, may play a role in photosystem I and II biogenesis. The polypeptide is Protein PsbN (Gnetum gnemon (Spanish joint-fir)).